The sequence spans 131 residues: Ribosomally synthesized cyclic peptide phomopsin precursor gigA (131 aa).

Positions 1–18 (MQFTLIFFYATLAAFGLA) are cleaved as a signal peptide. Propeptides lie at residues 19–38 (APSE…LDKR), 48–65 (ADLV…LDKR), 75–92 (ADMV…LDKR), 102–119 (ADMV…LAKR), and 129–131 (ADM).

GigA is processed by several endopeptidases including kexin proteases to produce 2 identical copies of the nonaxapeptide Ile-Asn-Phe-Lys-Ile-Pro-Tyr-Thr-Gly, one copy of the nonaketide Ile-Gly-Phe-Lys-Leu-Pro-Tyr-Arg-Gly and one copy of the nonaketide Pro-Asn-Phe-Lys-Met-Pro-Tyr-Arg-Gly, that are further modified into phomapsins B, C and A, respectively. After being excised from the precursor peptide, the core peptides are cyclized and modified post-translationally by enzymes encoded within the gene cluster. Epichloecyclin biosynthesis requires only dimethylation of the side-chain amino group of the conserved lysine for completion.

Its pathway is mycotoxin biosynthesis. Functionally, ribosomally synthesized cyclic peptide phomopsin precursor; part of the gene cluster that mediates the biosynthesis of the epichloecyclins, a group of nonapeptides, with a likely cyclic structure and dimethylation of the conserved lysine. The gigA translated product contains 4 repeated peptide embedding the nonapeptide Ile-Asn-Phe-Lys-Ile-Pro-Tyr-Thr-Gly in repeats 1 and 2, Ile-Gly-Phe-Lys-Leu-Pro-Tyr-Arg-Gly in repeat 3, and Pro-Asn-Phe-Lys-Met-Pro-Tyr-Arg-Gly in repeat 4 that are converted into epichloecyclins B, C and A, respectively. Moreover, removal of the last Gly residue in epichloecyclins B and C leads to epichloecyclins D and E, respectively. This chain is Ribosomally synthesized cyclic peptide phomopsin precursor gigA (nc25), found in Epichloe festucae (strain Fl1).